Here is a 477-residue protein sequence, read N- to C-terminus: Glycogen synthase (477 aa).

Lys-15 is an ADP-alpha-D-glucose binding site.

This sequence belongs to the glycosyltransferase 1 family. Bacterial/plant glycogen synthase subfamily.

The catalysed reaction is [(1-&gt;4)-alpha-D-glucosyl](n) + ADP-alpha-D-glucose = [(1-&gt;4)-alpha-D-glucosyl](n+1) + ADP + H(+). The protein operates within glycan biosynthesis; glycogen biosynthesis. In terms of biological role, synthesizes alpha-1,4-glucan chains using ADP-glucose. This Clostridium acetobutylicum (strain ATCC 824 / DSM 792 / JCM 1419 / IAM 19013 / LMG 5710 / NBRC 13948 / NRRL B-527 / VKM B-1787 / 2291 / W) protein is Glycogen synthase.